A 295-amino-acid chain; its full sequence is Replication-associated protein A (295 aa).

One can recognise a CRESS-DNA virus Rep endonuclease domain in the interval 12 to 114; it reads RLQTKYVFLT…DGNVITKGEF (103 aa). The RCR-1 motif lies at 19–22; sequence FLTY. Residues Glu53, His61, and His63 each contribute to the a divalent metal cation site. Residues 61 to 63 carry the RCR-2 motif; sequence HLH. Tyr101 serves as the catalytic For DNA cleavage activity. The RCR-3 motif lies at 101 to 104; the sequence is YISK. An a divalent metal cation-binding site is contributed by Asp105. The segment at 163–175 is oligomerization; that stretch reads SANKLFPPQPEIY. An LXCXE motif, interaction with host RBR1 motif is present at residues 184–188; it reads LQCHE. The tract at residues 232-295 is disordered; that stretch reads EGLEPGSPPS…PSNSSHSGSN (64 aa). The segment covering 267 to 295 has biased composition (low complexity); sequence PSTSLSMMTTRPTTSSTTSPSNSSHSGSN.

The protein belongs to the geminiviridae Rep protein family. As to quaternary structure, homooligomer. Interacts (via LXCXE domain) with host retinoblastoma-related protein 1 (RBR1), and may thereby deregulate the host cell cycle. Part of the C- and V-complexes which are RepA-Rep-DNA complexes involved in the c-sense and v-sense transcription. Requires Mg(2+) as cofactor. The cofactor is Mn(2+).

The protein localises to the host nucleus. Its subcellular location is the host cytoplasm. In terms of biological role, implicated in enhancement of V-sense gene expression. Acts a an inhibitor of C-sense gene transcription. The protein is Replication-associated protein A of Datura stramonium (Jimsonweed).